A 347-amino-acid polypeptide reads, in one-letter code: KRR1 small subunit processome component homolog (347 aa).

One can recognise a KH domain in the interval 124–194 (GCDIIKIGNL…VRDIVLETMN (71 aa)). Basic residues predominate over residues 231–246 (NKNLSKRKQPKVKKPK). The interval 231-347 (NKNLSKRKQP…LLKANKKSKS (117 aa)) is disordered. Residues 271 to 304 (FLNKEQKQAKRQQERQTKQAEAAKKQDERRNKDF) are a coiled coil. Basic and acidic residues-rich tracts occupy residues 272–303 (LNKE…RNKD) and 318–329 (KANDNDSSDSRV). The span at 337–347 (KLLKANKKSKS) shows a compositional bias: basic residues.

The protein belongs to the KRR1 family. Monomer. Component of the ribosomal small subunit (SSU) processome.

It localises to the nucleus. It is found in the nucleolus. Its function is as follows. Required for 40S ribosome biogenesis. Involved in nucleolar processing of pre-18S ribosomal RNA and ribosome assembly. Binds to RNA. Required for female germline development, cell viability during eye development and for survival of dividing cells and epithelial cells during early wing disk development. The protein is KRR1 small subunit processome component homolog of Drosophila willistoni (Fruit fly).